A 257-amino-acid chain; its full sequence is ADP-dependent (S)-NAD(P)H-hydrate dehydratase (257 aa).

One can recognise a YjeF C-terminal domain in the interval 1–257; the sequence is MGRLQRTLSN…VIERIPDTIR (257 aa). Position 200 (glycine 200) interacts with AMP. Residue aspartate 201 participates in (6S)-NADPHX binding.

This sequence belongs to the NnrD/CARKD family. Homotetramer. It depends on Mg(2+) as a cofactor.

The enzyme catalyses (6S)-NADHX + ADP = AMP + phosphate + NADH + H(+). It carries out the reaction (6S)-NADPHX + ADP = AMP + phosphate + NADPH + H(+). Catalyzes the dehydration of the S-form of NAD(P)HX at the expense of ADP, which is converted to AMP. Together with NAD(P)HX epimerase, which catalyzes the epimerization of the S- and R-forms, the enzyme allows the repair of both epimers of NAD(P)HX, a damaged form of NAD(P)H that is a result of enzymatic or heat-dependent hydration. The sequence is that of ADP-dependent (S)-NAD(P)H-hydrate dehydratase from Haloterrigena turkmenica (strain ATCC 51198 / DSM 5511 / JCM 9101 / NCIMB 13204 / VKM B-1734 / 4k) (Halococcus turkmenicus).